Here is a 565-residue protein sequence, read N- to C-terminus: Periplasmic trehalase (565 aa).

The first 30 residues, 1–30, serve as a signal peptide directing secretion; sequence MKSPAPSRPQKMALIPACIFLCFAALSVQA. Substrate-binding positions include arginine 152, 159–160, asparagine 196, 205–207, 277–279, and glycine 310; these read WD, RSQ, and RPE. Catalysis depends on proton donor/acceptor residues aspartate 312 and glutamate 496. Glutamate 511 is a binding site for substrate. The segment at 539–565 is disordered; that stretch reads CDNVPATRPLSESTTQPVKQKEAEPTP.

This sequence belongs to the glycosyl hydrolase 37 family. As to quaternary structure, monomer.

The protein localises to the periplasm. It catalyses the reaction alpha,alpha-trehalose + H2O = alpha-D-glucose + beta-D-glucose. Provides the cells with the ability to utilize trehalose at high osmolarity by splitting it into glucose molecules that can subsequently be taken up by the phosphotransferase-mediated uptake system. The polypeptide is Periplasmic trehalase (Escherichia coli O6:H1 (strain CFT073 / ATCC 700928 / UPEC)).